A 320-amino-acid polypeptide reads, in one-letter code: Phosphate acetyltransferase (320 aa).

It belongs to the phosphate acetyltransferase and butyryltransferase family.

It is found in the cytoplasm. It catalyses the reaction acetyl-CoA + phosphate = acetyl phosphate + CoA. It functions in the pathway metabolic intermediate biosynthesis; acetyl-CoA biosynthesis; acetyl-CoA from acetate: step 2/2. The sequence is that of Phosphate acetyltransferase (pta) from Mycoplasma pneumoniae (strain ATCC 29342 / M129 / Subtype 1) (Mycoplasmoides pneumoniae).